A 387-amino-acid chain; its full sequence is Putative acid--amine ligase YjfC (387 aa).

101 to 103 serves as a coordination point for ATP; sequence RMD. The Mg(2+) site is built by aspartate 103, glutamate 116, and asparagine 118. Residues lysine 265, lysine 302, glycine 309, glutamine 337, and 372–374 contribute to the ATP site; that span reads LIT.

It belongs to the glutathionylspermidine synthase preATP-grasp family.

Functionally, may be a ligase forming an amide bond. Shows ATPase activity. Despite its similarity to the C-terminal synthetase domain of Gss, is not a glutathionylspermidine (Gsp) synthetase. Cannot synthesize Gsp, glutathione (GSH), or GSH intermediates, from GSH and spermidine, cysteine and glutamate, gamma-glutamylcysteine and spermidine, and gamma-glutamylcysteine and glycine. Does not bind to Gsp. This is Putative acid--amine ligase YjfC (yjfC) from Escherichia coli (strain K12).